Consider the following 111-residue polypeptide: Colipase (111 aa).

A signal peptide spans 1–17 (MEKVLALVLLTLAVAYA). Positions 18 to 22 (APDPR) are cleaved as a propeptide — enterostatin, activation peptide. Cystine bridges form between Cys-34–Cys-45, Cys-40–Cys-56, Cys-44–Cys-78, Cys-66–Cys-86, and Cys-80–Cys-104.

The protein belongs to the colipase family. In terms of assembly, forms a 1:1 stoichiometric complex with pancreatic lipase. In terms of tissue distribution, expressed by the pancreas.

It is found in the secreted. Functionally, colipase is a cofactor of pancreatic lipase. It allows the lipase to anchor itself to the lipid-water interface. Without colipase the enzyme is washed off by bile salts, which have an inhibitory effect on the lipase. Its function is as follows. Enterostatin has a biological activity as a satiety signal. The polypeptide is Colipase (CLPS) (Myocastor coypus (Coypu)).